Consider the following 129-residue polypeptide: Follitropin subunit beta (129 aa).

Residues 1 to 18 form the signal peptide; the sequence is MKTLQFFFLFCCWKAICC. 6 disulfides stabilise this stretch: Cys-21-Cys-69, Cys-35-Cys-84, Cys-38-Cys-122, Cys-46-Cys-100, Cys-50-Cys-102, and Cys-105-Cys-112. Asn-25 and Asn-42 each carry an N-linked (GlcNAc...) asparagine glycan.

This sequence belongs to the glycoprotein hormones subunit beta family. In terms of assembly, heterodimer. The active follitropin is a heterodimer composed of an alpha chain/CGA shared with other hormones and a unique beta chain/FSHB shown here.

The protein localises to the secreted. In terms of biological role, together with the alpha chain CGA constitutes follitropin, the follicle-stimulating hormone, and provides its biological specificity to the hormone heterodimer. Binds FSHR, a G protein-coupled receptor, on target cells to activate downstream signaling pathways. Follitropin is involved in follicle development and spermatogenesis in reproductive organs. In Homo sapiens (Human), this protein is Follitropin subunit beta (FSHB).